The following is a 359-amino-acid chain: 3-dehydroquinate synthase (359 aa).

NAD(+) contacts are provided by residues 71 to 76 (DGEQFK), 105 to 109 (GVIGD), 129 to 130 (TT), lysine 142, lysine 151, and 169 to 172 (CLQT). Residues glutamate 184, histidine 247, and histidine 264 each coordinate Zn(2+).

The protein belongs to the sugar phosphate cyclases superfamily. Dehydroquinate synthase family. It depends on Co(2+) as a cofactor. Zn(2+) serves as cofactor. NAD(+) is required as a cofactor.

It localises to the cytoplasm. It carries out the reaction 7-phospho-2-dehydro-3-deoxy-D-arabino-heptonate = 3-dehydroquinate + phosphate. The protein operates within metabolic intermediate biosynthesis; chorismate biosynthesis; chorismate from D-erythrose 4-phosphate and phosphoenolpyruvate: step 2/7. Functionally, catalyzes the conversion of 3-deoxy-D-arabino-heptulosonate 7-phosphate (DAHP) to dehydroquinate (DHQ). In Shewanella sp. (strain ANA-3), this protein is 3-dehydroquinate synthase.